Consider the following 457-residue polypeptide: Peptidyl-prolyl cis-trans isomerase FKBP5 (457 aa).

M1 carries the post-translational modification N-acetylmethionine. Residues M1–T26 are disordered. Phosphoserine is present on S13. K28 carries the N6-acetyllysine modification. Residues G50–K138 form the PPIase FKBP-type 1 domain. K155 carries the N6-acetyllysine modification. The PPIase FKBP-type 2 domain occupies G165–E251. TPR repeat units lie at residues A268–E301, L317–N350, and E351–N384. The tract at residues A421–V457 is disordered. A Phosphoserine modification is found at S445.

In terms of assembly, part of a heteromultimeric cytoplasmic complex with HSP90AA1, HSPA1A/HSPA1B and steroid receptors. Upon ligand binding dissociates from the complex and FKBP4 takes its place. Interacts with functionally mature heterooligomeric progesterone receptor complexes along with HSP90 and TEBP. Interacts with NR3C1. Interacts with Akt/AKT1 and PHLPP1; enhancing dephosphorylation and subsequent activation of Akt/AKT1. Interacts with IFI44L; this interaction modulates the kinase activity of IKBKB and IKBKE. Interacts with IKBKB and IKBKE. Post-translationally, acetylation impairs ability to promote interaction between Akt/AKT1 and PHLPP1. Deacetylation by SIRT7 promotes interaction between Akt/AKT1 and PHLPP1, leading to suppress Akt/AKT1 activation. In terms of processing, ubiquitinated, leading to degradation in a proteasome-dependent manner. Deubiquitinated by USP49, leading to stabilization.

The protein localises to the cytoplasm. The protein resides in the nucleus. It catalyses the reaction [protein]-peptidylproline (omega=180) = [protein]-peptidylproline (omega=0). With respect to regulation, inhibited by both FK506 and rapamycin. Immunophilin protein with PPIase and co-chaperone activities. Component of unligated steroid receptors heterocomplexes through interaction with heat-shock protein 90 (HSP90). Plays a role in the intracellular trafficking of heterooligomeric forms of steroid hormone receptors maintaining the complex into the cytoplasm when unliganded. Acts as a regulator of Akt/AKT1 activity by promoting the interaction between Akt/AKT1 and PHLPP1, thereby enhancing dephosphorylation and subsequent activation of Akt/AKT1. Interacts with IKBKE and IKBKB which facilitates IKK complex assembly leading to increased IKBKE and IKBKB kinase activity, NF-kappaB activation, and IFN production. This Chlorocebus aethiops (Green monkey) protein is Peptidyl-prolyl cis-trans isomerase FKBP5 (FKBP5).